Consider the following 208-residue polypeptide: Guanylate kinase (208 aa).

The Guanylate kinase-like domain maps to 8–187 (GVCLVISAPS…AISQARSVLT (180 aa)). Position 15–22 (15–22 (APSGAGKS)) interacts with ATP.

This sequence belongs to the guanylate kinase family.

The protein localises to the cytoplasm. It catalyses the reaction GMP + ATP = GDP + ADP. Essential for recycling GMP and indirectly, cGMP. The sequence is that of Guanylate kinase from Gluconobacter oxydans (strain 621H) (Gluconobacter suboxydans).